The chain runs to 246 residues: 14-3-3 protein beta/alpha (246 aa).

An N-acetylmethionine modification is found at methionine 1. N-acetylthreonine; in 14-3-3 protein beta/alpha, N-terminally processed is present on threonine 2. Threonine 2 is modified (phosphothreonine). Lysine 5 carries the post-translational modification N6-acetyllysine. Lysine 51 carries the N6-acetyllysine; alternate modification. A Glycyl lysine isopeptide (Lys-Gly) (interchain with G-Cter in SUMO2); alternate cross-link involves residue lysine 51. Serine 60 is modified (phosphoserine). Lysine 70 carries the post-translational modification N6-acetyllysine. A 3'-nitrotyrosine mark is found at tyrosine 84 and tyrosine 106. At lysine 117 the chain carries N6-acetyllysine. Phosphoserine is present on residues serine 186 and serine 232.

The protein belongs to the 14-3-3 family. In terms of assembly, homodimer. Interacts with SAMSN1 and PRKCE. Interacts with AKAP13. Interacts with SSH1 and TORC2/CRTC2. Interacts with ABL1; the interaction results in cytoplasmic location of ABL1 and inhibition of cABL-mediated apoptosis. Interacts with ROR2 (dimer); the interaction results in phosphorylation of YWHAB on tyrosine residues. Interacts with GAB2. Interacts with YAP1 (phosphorylated form). Interacts with the phosphorylated (by AKT1) form of SRPK2. Interacts with PKA-phosphorylated AANAT. Interacts with MYO1C. Interacts with SIRT2. Interacts with the 'Thr-369' phosphorylated form of DAPK2. Interacts with PI4KB, TBC1D22A and TBC1D22B. Interacts with the 'Ser-1134' and 'Ser-1161' phosphorylated form of SOS1. Interacts (via phosphorylated form) with YWHAB; this interaction occurs in a protein kinase AKT1-dependent manner. Interacts with SLITRK1. Interacts with SYNPO2 (phosphorylated form); YWHAB competes with ACTN2 for interaction with SYNPO2. Interacts with RIPOR2 (via phosphorylated form); this interaction occurs in a chemokine-dependent manner and does not compete for binding of RIPOR2 with RHOA nor blocks inhibition of RIPOR2-mediated RHOA activity. Interacts with MARK2 and MARK3. Interacts with TESK1; the interaction is dependent on the phosphorylation of TESK1 'Ser-439' and inhibits TESK1 kinase activity. Interacts with MEFV. Interacts with HDAC4. Interacts with ADAM22 (via C-terminus). In terms of processing, the alpha, brain-specific form differs from the beta form in being phosphorylated. Phosphorylated on Ser-60 by protein kinase C delta type catalytic subunit in a sphingosine-dependent fashion. Post-translationally, isoform Short contains a N-acetylmethionine at position 1.

Its subcellular location is the cytoplasm. It is found in the melanosome. In terms of biological role, adapter protein implicated in the regulation of a large spectrum of both general and specialized signaling pathways. Binds to a large number of partners, usually by recognition of a phosphoserine or phosphothreonine motif. Binding generally results in the modulation of the activity of the binding partner. Negative regulator of osteogenesis. Blocks the nuclear translocation of the phosphorylated form (by AKT1) of SRPK2 and antagonizes its stimulatory effect on cyclin D1 expression resulting in blockage of neuronal apoptosis elicited by SRPK2. Negative regulator of signaling cascades that mediate activation of MAP kinases via AKAP13. This chain is 14-3-3 protein beta/alpha (Ywhab), found in Rattus norvegicus (Rat).